Consider the following 295-residue polypeptide: Nucleotide-binding protein Sare_3328 (295 aa).

19–26 is an ATP binding site; the sequence is GVSGGGRS. A GTP-binding site is contributed by 70–73; it reads DVRS.

This sequence belongs to the RapZ-like family.

Its function is as follows. Displays ATPase and GTPase activities. This Salinispora arenicola (strain CNS-205) protein is Nucleotide-binding protein Sare_3328.